We begin with the raw amino-acid sequence, 273 residues long: 4-hydroxy-tetrahydrodipicolinate reductase (273 aa).

NAD(+) is bound by residues 12–17 and glutamate 38; that span reads GAGGRM. NADP(+) is bound at residue arginine 39. NAD(+) contacts are provided by residues 102-104 and 126-129; these read GTT and AANF. Histidine 159 functions as the Proton donor/acceptor in the catalytic mechanism. (S)-2,3,4,5-tetrahydrodipicolinate is bound at residue histidine 160. The active-site Proton donor is lysine 163. A (S)-2,3,4,5-tetrahydrodipicolinate-binding site is contributed by 169–170; sequence GT.

The protein belongs to the DapB family. Homotetramer.

The protein localises to the cytoplasm. The catalysed reaction is (S)-2,3,4,5-tetrahydrodipicolinate + NAD(+) + H2O = (2S,4S)-4-hydroxy-2,3,4,5-tetrahydrodipicolinate + NADH + H(+). It carries out the reaction (S)-2,3,4,5-tetrahydrodipicolinate + NADP(+) + H2O = (2S,4S)-4-hydroxy-2,3,4,5-tetrahydrodipicolinate + NADPH + H(+). It functions in the pathway amino-acid biosynthesis; L-lysine biosynthesis via DAP pathway; (S)-tetrahydrodipicolinate from L-aspartate: step 4/4. Its function is as follows. Catalyzes the conversion of 4-hydroxy-tetrahydrodipicolinate (HTPA) to tetrahydrodipicolinate. This Yersinia pestis bv. Antiqua (strain Antiqua) protein is 4-hydroxy-tetrahydrodipicolinate reductase.